The primary structure comprises 625 residues: Interleukin-1 receptor-associated kinase-like 2 (625 aa).

Residues 13–94 enclose the Death domain; sequence LDDPCRNMDA…RAAQIILNWK (82 aa). Positions 111–181 are disordered; it reads KPEKPLAASV…SSDSKDFSTS (71 aa). S144 carries the phosphoserine modification. Residues 169–181 are compositionally biased toward polar residues; sequence LPTSSDSKDFSTS. In terms of domain architecture, Protein kinase spans 210–503; it reads FNQNHKISQG…GSVAAVEEWL (294 aa). ATP-binding positions include 216 to 224, K237, and 337 to 340; these read ISQGTFADV and KSSN. The tract at residues 513–539 is disordered; the sequence is SGLSEGTGSSSNTPEETDDVDNSSLDA. Residues 516–526 show a composition bias toward polar residues; sequence SEGTGSSSNTP.

The protein belongs to the protein kinase superfamily. TKL Ser/Thr protein kinase family. Pelle subfamily. As to quaternary structure, interacts with MYD88. IL-1 stimulation leads to the formation of a signaling complex which dissociates from the IL-1 receptor following the binding of PELI1.

Functionally, binds to the IL-1 type I receptor following IL-1 engagement, triggering intracellular signaling cascades leading to transcriptional up-regulation and mRNA stabilization. This is Interleukin-1 receptor-associated kinase-like 2 (IRAK2) from Pongo abelii (Sumatran orangutan).